The chain runs to 341 residues: Methionine import ATP-binding protein MetN 2 (341 aa).

Residues 2-241 (IEASELTKVY…PKAPLTQEFI (240 aa)) enclose the ABC transporter domain. Residue 38–45 (GYSGAGKS) coordinates ATP.

The protein belongs to the ABC transporter superfamily. Methionine importer (TC 3.A.1.24) family. As to quaternary structure, the complex is composed of two ATP-binding proteins (MetN), two transmembrane proteins (MetI) and a solute-binding protein (MetQ).

The protein resides in the cell membrane. The enzyme catalyses L-methionine(out) + ATP + H2O = L-methionine(in) + ADP + phosphate + H(+). It catalyses the reaction D-methionine(out) + ATP + H2O = D-methionine(in) + ADP + phosphate + H(+). Functionally, part of the ABC transporter complex MetNIQ involved in methionine import. Responsible for energy coupling to the transport system. The sequence is that of Methionine import ATP-binding protein MetN 2 from Shouchella clausii (strain KSM-K16) (Alkalihalobacillus clausii).